The primary structure comprises 517 residues: Retrotransposon-like protein 1 (517 aa).

Disordered regions lie at residues 1–29 and 142–161; these read MEVN…QQQL and EEER…DARS.

The protein is Retrotransposon-like protein 1 (retr-1) of Caenorhabditis elegans.